The sequence spans 426 residues: Dihydroorotase (426 aa).

Positions 58 and 60 each coordinate Zn(2+). Residues 60–62 and Asn-92 each bind substrate; that span reads HLR. Residues Asp-150, His-177, and His-230 each contribute to the Zn(2+) site. Asn-276 is a binding site for substrate. Asp-303 is a binding site for Zn(2+). Asp-303 is an active-site residue. Substrate-binding positions include His-307 and 321–322; that span reads FG.

It belongs to the metallo-dependent hydrolases superfamily. DHOase family. Class I DHOase subfamily. It depends on Zn(2+) as a cofactor.

It catalyses the reaction (S)-dihydroorotate + H2O = N-carbamoyl-L-aspartate + H(+). The protein operates within pyrimidine metabolism; UMP biosynthesis via de novo pathway; (S)-dihydroorotate from bicarbonate: step 3/3. Its function is as follows. Catalyzes the reversible cyclization of carbamoyl aspartate to dihydroorotate. The sequence is that of Dihydroorotase from Listeria innocua serovar 6a (strain ATCC BAA-680 / CLIP 11262).